A 170-amino-acid chain; its full sequence is Crossover junction endodeoxyribonuclease RuvC (170 aa).

Active-site residues include D8, E67, and D139. Mg(2+) contacts are provided by D8, E67, and D139.

Belongs to the RuvC family. Homodimer which binds Holliday junction (HJ) DNA. The HJ becomes 2-fold symmetrical on binding to RuvC with unstacked arms; it has a different conformation from HJ DNA in complex with RuvA. In the full resolvosome a probable DNA-RuvA(4)-RuvB(12)-RuvC(2) complex forms which resolves the HJ. The cofactor is Mg(2+).

The protein resides in the cytoplasm. It carries out the reaction Endonucleolytic cleavage at a junction such as a reciprocal single-stranded crossover between two homologous DNA duplexes (Holliday junction).. In terms of biological role, the RuvA-RuvB-RuvC complex processes Holliday junction (HJ) DNA during genetic recombination and DNA repair. Endonuclease that resolves HJ intermediates. Cleaves cruciform DNA by making single-stranded nicks across the HJ at symmetrical positions within the homologous arms, yielding a 5'-phosphate and a 3'-hydroxyl group; requires a central core of homology in the junction. The consensus cleavage sequence is 5'-(A/T)TT(C/G)-3'. Cleavage occurs on the 3'-side of the TT dinucleotide at the point of strand exchange. HJ branch migration catalyzed by RuvA-RuvB allows RuvC to scan DNA until it finds its consensus sequence, where it cleaves and resolves the cruciform DNA. The chain is Crossover junction endodeoxyribonuclease RuvC from Pectobacterium atrosepticum (strain SCRI 1043 / ATCC BAA-672) (Erwinia carotovora subsp. atroseptica).